The sequence spans 138 residues: Large ribosomal subunit protein bL19 (138 aa).

Belongs to the bacterial ribosomal protein bL19 family.

Its function is as follows. This protein is located at the 30S-50S ribosomal subunit interface and may play a role in the structure and function of the aminoacyl-tRNA binding site. The protein is Large ribosomal subunit protein bL19 of Rickettsia africae (strain ESF-5).